The primary structure comprises 102 residues: Large ribosomal subunit protein bL21 (102 aa).

The segment covering 79-91 (RKDSKRKKGHRQP) has biased composition (basic residues). The tract at residues 79-102 (RKDSKRKKGHRQPYTKLTIDKINA) is disordered.

It belongs to the bacterial ribosomal protein bL21 family. As to quaternary structure, part of the 50S ribosomal subunit. Contacts protein L20.

This protein binds to 23S rRNA in the presence of protein L20. This chain is Large ribosomal subunit protein bL21, found in Staphylococcus epidermidis (strain ATCC 35984 / DSM 28319 / BCRC 17069 / CCUG 31568 / BM 3577 / RP62A).